Reading from the N-terminus, the 196-residue chain is Dehydrogenase RED3 (196 aa).

The NADP(+) site is built by Ser47, Asp74, Asn101, Arg134, Tyr166, and Lys170. Tyr166 serves as the catalytic Proton acceptor. The active-site Lowers pKa of active site Tyr is the Lys170.

Belongs to the short-chain dehydrogenases/reductases (SDR) family.

It carries out the reaction a primary alcohol + NAD(+) = an aldehyde + NADH + H(+). It catalyses the reaction a secondary alcohol + NAD(+) = a ketone + NADH + H(+). Its pathway is mycotoxin biosynthesis. Dehydrogenase; part of the Tox1B locus, one of the 2 loci that mediate the biosynthesis of T-toxin, a family of linear polyketides 37 to 45 carbons in length, of which the major component is 41 carbons, and which leads to high virulence to maize. One of the PKSs (PKS1 or PKS2) could synthesize a precursor, used subsequently by the other PKS as starter unit, to add additional carbons. Variability in the length of the final carbon backbone C35-47 could be achieved by varying the number of condensation cycles, or use of different starter or extender units or might be due to decarboxylation of the penultimate product, catalyzed by DEC1. Additional proteins are required for the biosynthesis of T-toxin, including oxidoreductases RED1, RED2, RED3, LAM1 and OXI1, as well as esterase TOX9. This chain is Dehydrogenase RED3, found in Cochliobolus heterostrophus (strain C4 / ATCC 48331 / race T) (Southern corn leaf blight fungus).